The following is a 117-amino-acid chain: uncharacterized protein (117 aa).

This is an uncharacterized protein from Microplitis demolitor bracovirus (isolate Webb) (MdBV).